The primary structure comprises 314 residues: tRNA dimethylallyltransferase (314 aa).

11–18 (GPTAVGKT) contacts ATP. 13-18 (TAVGKT) provides a ligand contact to substrate. The interaction with substrate tRNA stretch occupies residues 36 to 39 (DSMQ).

The protein belongs to the IPP transferase family. Monomer. Mg(2+) is required as a cofactor.

It catalyses the reaction adenosine(37) in tRNA + dimethylallyl diphosphate = N(6)-dimethylallyladenosine(37) in tRNA + diphosphate. Its function is as follows. Catalyzes the transfer of a dimethylallyl group onto the adenine at position 37 in tRNAs that read codons beginning with uridine, leading to the formation of N6-(dimethylallyl)adenosine (i(6)A). This chain is tRNA dimethylallyltransferase, found in Bacillus anthracis.